A 544-amino-acid polypeptide reads, in one-letter code: MAAKDVRFGNDARVKMLEGVNILADAVKVTLGPKGRNVVLDKSFGAPTITKDGVSVAREIELEDKFQNMGAQMVKEVASQANDAAGDGTTTATVLAQAIVNEGLKAVAAGMNPMDLKRGIDKAVIAAVEELKALSVPCADTKAIAQVGTISANSDSSVGNIIAEAMEKVGRDGVITVEEGQALQDELDVVEGMQFDRGYLSPYFINNQESGSVELDNPFILLVDKKISNIRELLPVLEGVAKASRPLLIVAEDVEGEALATLVVNNMRGIVKVAAVKAPGFGDRRKAMLQDIAILTGGVVISEEIGLELEKATLEDLGQAKRVSITKENSTIIDGAGDQAAIQGRVAQIRQQIEEATSDYDKEKLQERVAKLAGGVAVIKVGAATEVEMKEKKDRVEDALHATRAAVEEGVVAGGGVALIRAASKLSSLVGDNEEQNVGIRVALRAMEAPLRQIVKNAGDEESVVANNVRAGEGNYGYNAATGVYGDMIEMGILDPTKVTRSALQFAASVAGLMITTEAMITELPKKDAPAMPDMGMGGMGGMM.

ATP is bound by residues Thr-30–Pro-33, Lys-51, Asp-87–Thr-91, Gly-415, Asn-479–Ala-481, and Asp-495.

This sequence belongs to the chaperonin (HSP60) family. In terms of assembly, forms a cylinder of 14 subunits composed of two heptameric rings stacked back-to-back. Interacts with the co-chaperonin GroES.

It localises to the cytoplasm. The enzyme catalyses ATP + H2O + a folded polypeptide = ADP + phosphate + an unfolded polypeptide.. Together with its co-chaperonin GroES, plays an essential role in assisting protein folding. The GroEL-GroES system forms a nano-cage that allows encapsulation of the non-native substrate proteins and provides a physical environment optimized to promote and accelerate protein folding. This chain is Chaperonin GroEL 1, found in Vibrio cholerae serotype O1 (strain ATCC 39315 / El Tor Inaba N16961).